We begin with the raw amino-acid sequence, 271 residues long: Phosphate import ATP-binding protein PstB 1 (271 aa).

Residues 25-266 form the ABC transporter domain; it reads LTVEHLNLYY…PTQRRTEDYI (242 aa). 57 to 64 contributes to the ATP binding site; that stretch reads GPSGCGKS.

Belongs to the ABC transporter superfamily. Phosphate importer (TC 3.A.1.7) family. As to quaternary structure, the complex is composed of two ATP-binding proteins (PstB), two transmembrane proteins (PstC and PstA) and a solute-binding protein (PstS).

It is found in the cell inner membrane. It carries out the reaction phosphate(out) + ATP + H2O = ADP + 2 phosphate(in) + H(+). Its function is as follows. Part of the ABC transporter complex PstSACB involved in phosphate import. Responsible for energy coupling to the transport system. The sequence is that of Phosphate import ATP-binding protein PstB 1 from Pectobacterium atrosepticum (strain SCRI 1043 / ATCC BAA-672) (Erwinia carotovora subsp. atroseptica).